A 72-amino-acid polypeptide reads, in one-letter code: DNA-directed RNA polymerase subunit omega (72 aa).

The protein belongs to the RNA polymerase subunit omega family. The RNAP catalytic core consists of 2 alpha, 1 beta, 1 beta' and 1 omega subunit. When a sigma factor is associated with the core the holoenzyme is formed, which can initiate transcription.

It carries out the reaction RNA(n) + a ribonucleoside 5'-triphosphate = RNA(n+1) + diphosphate. In terms of biological role, promotes RNA polymerase assembly. Latches the N- and C-terminal regions of the beta' subunit thereby facilitating its interaction with the beta and alpha subunits. The sequence is that of DNA-directed RNA polymerase subunit omega from Clostridium kluyveri (strain NBRC 12016).